The sequence spans 520 residues: 3-phosphoshikimate 1-carboxyvinyltransferase, chloroplastic (520 aa).

Residues 1 to 76 (MAQVSRICNG…KVMSSVSTAE (76 aa)) constitute a chloroplast transit peptide. The disordered stretch occupies residues 20-39 (LSKSSQRKSPLSVSLKTQQH). K99, S100, and R104 together coordinate 3-phosphoshikimate. Position 99 (K99) interacts with phosphoenolpyruvate. G177 and R207 together coordinate phosphoenolpyruvate. Positions 254, 255, 256, 282, 407, and 434 each coordinate 3-phosphoshikimate. Phosphoenolpyruvate is bound at residue Q256. The Proton acceptor role is filled by D407. Phosphoenolpyruvate-binding residues include R438, R480, and K505.

This sequence belongs to the EPSP synthase family.

The protein localises to the plastid. Its subcellular location is the chloroplast. It carries out the reaction 3-phosphoshikimate + phosphoenolpyruvate = 5-O-(1-carboxyvinyl)-3-phosphoshikimate + phosphate. It functions in the pathway metabolic intermediate biosynthesis; chorismate biosynthesis; chorismate from D-erythrose 4-phosphate and phosphoenolpyruvate: step 6/7. Functionally, catalyzes the transfer of the enolpyruvyl moiety of phosphoenolpyruvate (PEP) to the 5-hydroxyl of shikimate-3-phosphate (S3P) to produce enolpyruvyl shikimate-3-phosphate and inorganic phosphate. This is 3-phosphoshikimate 1-carboxyvinyltransferase, chloroplastic from Arabidopsis thaliana (Mouse-ear cress).